The following is a 40-amino-acid chain: Bacterioferritin heavy chain (40 aa).

The Ferritin-like diiron domain maps to 1 to 40 (MRGNPEVIDYLNMLIGGELAARDQYLIHSRMYEDWGLTKY). Glu18 serves as a coordination point for Fe cation.

It belongs to the bacterioferritin family. As to quaternary structure, oligomer consisting of two types of subunits: light chain and heavy chain.

Functionally, may perform analogous functions in iron detoxification and storage to that of animal ferritins. Contains approximately 750 iron atoms per molecule. The chain is Bacterioferritin heavy chain from Absidia spinosa.